Reading from the N-terminus, the 295-residue chain is UDP-N-acetylenolpyruvoylglucosamine reductase (295 aa).

The FAD-binding PCMH-type domain occupies 23–188 (KVGGPADFLA…ISAKFALKPG (166 aa)). Residue arginine 167 is part of the active site. Serine 217 serves as the catalytic Proton donor. The active site involves glutamate 287.

This sequence belongs to the MurB family. Requires FAD as cofactor.

The protein resides in the cytoplasm. The catalysed reaction is UDP-N-acetyl-alpha-D-muramate + NADP(+) = UDP-N-acetyl-3-O-(1-carboxyvinyl)-alpha-D-glucosamine + NADPH + H(+). It participates in cell wall biogenesis; peptidoglycan biosynthesis. Its function is as follows. Cell wall formation. In Streptococcus pyogenes serotype M1, this protein is UDP-N-acetylenolpyruvoylglucosamine reductase.